The sequence spans 350 residues: MATTATPEYGWWAGNSRFALQSGKWLSAHIAQYALITFWAGGITLFELARYNPDVSMGEQGLILIPHLATLGWGIGSGGQVVDTYPYFVIGVIHLVASAVFGAGALYHALKGPEDLSQSDFEFAKNFHFEWDDAAKLGNILGHHLLTLGYAALLFVIWLRFHGVYDSTIGEVRVVTNPGATILSVLFEYGWFTPDHNPYFVNNLEDLASGHAYIAVVLLAGGFWHINQAPFPWAQRLLASLFSPEGLLSASLAGLSMAGFAAAYFSAVNTLAYPVEFFGPPLELKFSVAPYFVDTIDLPNGAHTARAWLCNVHFFLAFFVLQGHLWHALRALGFDFKRIPQALGSLSGEA.

6 consecutive transmembrane segments (helical) span residues 26-46 (LSAHIAQYALITFWAGGITLF), 62-82 (LILIPHLATLGWGIGSGGQVV), 87-107 (YFVIGVIHLVASAVFGAGALY), 214-234 (IAVVLLAGGFWHINQAPFPWA), 248-268 (LSASLAGLSMAGFAAAYFSAV), and 309-329 (LCNVHFFLAFFVLQGHLWHAL).

It belongs to the PsbB/PsbC family. IsiA/Pcb subfamily. As to quaternary structure, the antenna complex consists of chlorophylls (a and b) and chlorophyll a/b binding proteins. It depends on chlorophyll a as a cofactor. Requires chlorophyll b as cofactor.

It is found in the cellular thylakoid membrane. In terms of biological role, the antenna complex functions as a light receptor, it captures and delivers excitation energy to photosystems II and I. The Prochlorales pcb genes are not related to higher plant LHCs. The protein is Chlorophyll a/b light-harvesting protein PcbA (pcbA) of Prochlorothrix hollandica.